Reading from the N-terminus, the 141-residue chain is Heavy metal-associated isoprenylated plant protein 29 (141 aa).

In terms of domain architecture, HMA spans M1–I59. Residues C7 and C10 each contribute to the a metal cation site. C138 carries the post-translational modification Cysteine methyl ester. The S-farnesyl cysteine moiety is linked to residue C138. Positions S139–M141 are cleaved as a propeptide — removed in mature form.

Belongs to the HIPP family.

In terms of biological role, heavy-metal-binding protein. This is Heavy metal-associated isoprenylated plant protein 29 from Arabidopsis thaliana (Mouse-ear cress).